A 292-amino-acid polypeptide reads, in one-letter code: Transforming growth factor-beta receptor type 3-like protein (292 aa).

The first 16 residues, 1 to 16 (MLGTVLLLALLPGITT), serve as a signal peptide directing secretion. The ZP; truncated domain maps to 17–170 (LPSGPPAPPF…APAPLTPPPP (154 aa)). The Extracellular portion of the chain corresponds to 17–244 (LPSGPPAPPF…PAPAALEPAP (228 aa)). Cysteines 85 and 147 form a disulfide. The disordered stretch occupies residues 160-236 (RAPAPLTPPP…AVRPEPPAPA (77 aa)). Composition is skewed to pro residues over residues 164-175 (PLTPPPPPPPSR) and 213-222 (PRPPPRPPKS). The chain crosses the membrane as a helical span at residues 245 to 265 (VVALVLAAFVLGAALAAGLGL). Over 266–292 (VCAHSAPHAPGPPARASPSGPQPRRSQ) the chain is Cytoplasmic. A disordered region spans residues 273 to 292 (HAPGPPARASPSGPQPRRSQ). Positions 281 to 292 (ASPSGPQPRRSQ) are enriched in low complexity.

In terms of processing, glycosylated. In terms of tissue distribution, expressed in pituitary gland gonadotrope cells.

It localises to the cell membrane. In terms of biological role, expressed in gonadotrope cells, acts as an inhibin B coreceptor and regulates follicle-stimulating hormone (FSH) levels and female fertility. The chain is Transforming growth factor-beta receptor type 3-like protein from Homo sapiens (Human).